The primary structure comprises 928 residues: DNA-binding protein RFX6 (928 aa).

2 disordered regions span residues 1 to 22 (MAKV…QVSP) and 53 to 102 (PGGA…AADL). The segment covering 92–101 (SHDSKTKAAD) has biased composition (basic and acidic residues). A DNA-binding region (RFX-type winged-helix) is located at residues 124–199 (TLQWLEENYI…YHYYGIGIKE (76 aa)).

Belongs to the RFX family. Interacts with RFX3.

It localises to the nucleus. Its function is as follows. Transcription factor required to direct islet cell differentiation during endocrine pancreas development. Specifically required for the differentiation of 4 of the 5 islet cell types and for the production of insulin. Not required for pancreatic PP (polypeptide-producing) cells differentiation. Acts downstream of NEUROG3 and regulates the transcription factors involved in beta-cell maturation and function, thereby restricting the expression of the beta-cell differentiation and specification genes, and thus the beta-cell fate choice. Activates transcription by forming a heterodimer with RFX3 and binding to the X-box in the promoter of target genes. Involved in glucose-stimulated insulin secretion by promoting insulin and L-type calcium channel gene transcription. The protein is DNA-binding protein RFX6 (RFX6) of Ailuropoda melanoleuca (Giant panda).